Reading from the N-terminus, the 853-residue chain is Auxin response factor 23 (853 aa).

The tract at residues 118-141 is disordered; sequence PESKQQEDNGSTEEEVPSAPAAGH. The segment at residues 149–251 is a DNA-binding region (TF-B3); the sequence is FCKTLTASDT…ELRVGVRRAM (103 aa). Disordered stretches follow at residues 422–484 and 647–723; these read ESEP…RMQM and PAKS…QGVS. Polar residues predominate over residues 425-455; that stretch reads PNGTQRTFQTQENATPKSGFGNSSELESAQK. A compositionally biased stretch (basic and acidic residues) spans 672-686; that stretch reads EWRRPDVTEVEKCSD. The segment covering 706–723 has biased composition (polar residues); sequence PSSQQASRNMSCKSQGVS. Residues 725–809 form the PB1 domain; the sequence is RSCKKVHKQG…HKIFIYTREE (85 aa). Positions 815 to 853 are disordered; it reads PGTLNSRSEDSHANSMERGSVGREMRGCLSTSSLNSENC. A compositionally biased stretch (polar residues) spans 843–853; it reads LSTSSLNSENC.

It belongs to the ARF family. In terms of assembly, homodimers and heterodimers. Interacts with CRL1. As to expression, expressed in roots, culms, leaves and young panicles.

The protein resides in the nucleus. In terms of biological role, auxin response factors (ARFs) are transcriptional factors that bind specifically to the DNA sequence 5'-TGTCTC-3' found in the auxin-responsive promoter elements (AuxREs). The polypeptide is Auxin response factor 23 (ARF23) (Oryza sativa subsp. japonica (Rice)).